Consider the following 923-residue polypeptide: Lysosomal acid alpha-glucosidase (923 aa).

Positions 1-17 are cleaved as a signal peptide; it reads MKHQVLLPLLVTTAIIA. Residues 18-36 constitute a propeptide that is removed on maturation; sequence GSVGVYTHSKPLLGQSQDQ. N-linked (GlcNAc...) asparagine glycosylation is found at Asn-65, Asn-405, and Asn-440. The active-site Nucleophile is Asp-455. Residue Glu-458 is part of the active site. The active-site Proton donor is Asp-585. Asn-586, Asn-621, Asn-646, Asn-848, Asn-908, and Asn-912 each carry an N-linked (GlcNAc...) asparagine glycan.

Belongs to the glycosyl hydrolase 31 family.

The protein localises to the lysosome. The protein resides in the secreted. It carries out the reaction Hydrolysis of terminal, non-reducing (1-&gt;4)-linked alpha-D-glucose residues with release of alpha-D-glucose.. Essential for the degradation of glycogen to glucose in lysosomes. Has both alpha-1,4 and alpha-1,6-glucosidase activity. The protein is Lysosomal acid alpha-glucosidase of Tetrahymena pyriformis.